Reading from the N-terminus, the 76-residue chain is Putative membrane protein insertion efficiency factor (76 aa).

The protein belongs to the UPF0161 family.

It is found in the cell inner membrane. In terms of biological role, could be involved in insertion of integral membrane proteins into the membrane. This chain is Putative membrane protein insertion efficiency factor, found in Paraburkholderia phymatum (strain DSM 17167 / CIP 108236 / LMG 21445 / STM815) (Burkholderia phymatum).